The sequence spans 974 residues: GATOR2 complex protein WDR59 (974 aa).

7 WD repeats span residues 57–98 (QSKW…GEVG), 103–143 (GHTR…KPTV), 146–185 (SAVA…TAVE), 189–229 (AHLS…KYLN), 232–276 (PCQV…TPVH), 278–318 (FVGH…RVDS), and 319–362 (QMQR…TASH). Positions 350–374 (HTEDTDHQHTASHGEEEALKEDPPR) are disordered. Residues 393-494 (QEFSLINVQI…RQLVSCLESF (102 aa)) form the RWD domain. Position 564 is a phosphoserine (S564). Residues 668–706 (LNVNDIQETCQKNAASALLVGRKDLVQVWSLATVATDLC) form a WD 8 repeat. Phosphoserine occurs at positions 821, 822, and 830. The disordered stretch occupies residues 831–852 (LTYSDPRERERDQHDKNKRLLD). The segment covering 835–851 (DPRERERDQHDKNKRLL) has biased composition (basic and acidic residues). The segment at 901–920 (YCSHCRSEVRGTQCAICKGF) adopts a C4-type zinc-finger fold. Positions 902, 905, 914, 917, 927, 938, 943, 946, 949, 960, 964, 966, and 968 each coordinate Zn(2+). Residues 921–973 (TFQCAICHVAVRGSSNFCLTCGHGGHTSHMMEWFRTQEVCPTGCGCHCLLEST) form an RING-type; atypical zinc finger.

It belongs to the WD repeat WDR59 family. Component of the GATOR2 subcomplex, composed of MIOS, SEC13, SEH1L, WDR24 and WDR59. The GATOR2 complex interacts with CASTOR1 and CASTOR2; the interaction is negatively regulated by arginine. The GATOR2 complex interacts with SESN1, SESN2 and SESN3; the interaction is negatively regulated by amino acids. Interacts with DDB1-CUL4A/B E3 ligase complexes.

It is found in the lysosome membrane. With respect to regulation, the GATOR2 complex is negatively regulated by the upstream amino acid sensors CASTOR1 and SESN2, which sequester the GATOR2 complex in absence of amino acids. In the presence of abundant amino acids, GATOR2 is released from CASTOR1 and SESN2 and activated. In terms of biological role, as a component of the GATOR2 complex, functions as an activator of the amino acid-sensing branch of the mTORC1 signaling pathway. The GATOR2 complex indirectly activates mTORC1 through the inhibition of the GATOR1 subcomplex. GATOR2 probably acts as an E3 ubiquitin-protein ligase toward GATOR1. In the presence of abundant amino acids, the GATOR2 complex mediates ubiquitination of the NPRL2 core component of the GATOR1 complex, leading to GATOR1 inactivation. In the absence of amino acids, GATOR2 is inhibited, activating the GATOR1 complex. The chain is GATOR2 complex protein WDR59 from Homo sapiens (Human).